We begin with the raw amino-acid sequence, 438 residues long: ATP-dependent RNA helicase SUB2 (438 aa).

Acidic residues predominate over residues 1-19; the sequence is MSHEGEEDLLEYSDNEQEI. The tract at residues 1–44 is disordered; that stretch reads MSHEGEEDLLEYSDNEQEIQVDNTKATEVAGNGEEAADGKDGDK. The short motif at 54–82 is the Q motif element; the sequence is TGFKDFLLKPELSRAIIDCGFEHPSEVQQ. The region spanning 85 to 260 is the Helicase ATP-binding domain; it reads IPQSIHGTDV…RRFLQNPLEI (176 aa). 98–105 is a binding site for ATP; it reads AKSGLGKT. The short motif at 207 to 210 is the DECD box element; that stretch reads DECD. In terms of domain architecture, Helicase C-terminal spans 272–433; it reads GLQQYYIRLE…EFPEEGVDPS (162 aa).

This sequence belongs to the DEAD box helicase family. DECD subfamily.

The protein resides in the nucleus. It carries out the reaction ATP + H2O = ADP + phosphate + H(+). Its function is as follows. ATP-binding RNA helicase involved in transcription elongation and required for the export of mRNA out of the nucleus. SUB2 also plays a role in pre-mRNA splicing and spliceosome assembly. May be involved in rDNA and telomeric silencing, and maintenance of genome integrity. The polypeptide is ATP-dependent RNA helicase SUB2 (SUB2) (Eremothecium gossypii (strain ATCC 10895 / CBS 109.51 / FGSC 9923 / NRRL Y-1056) (Yeast)).